A 969-amino-acid chain; its full sequence is Leucine--tRNA ligase (969 aa).

Positions 1–23 are disordered; that stretch reads MTESPTTSPATGSGAAAPDSDAP. The short motif at 78–89 is the 'HIGH' region element; sequence PYPSGEGLHVGH. Positions 737–741 match the 'KMSKS' region motif; sequence KIGKS. Lys-740 contributes to the ATP binding site.

Belongs to the class-I aminoacyl-tRNA synthetase family.

It is found in the cytoplasm. It catalyses the reaction tRNA(Leu) + L-leucine + ATP = L-leucyl-tRNA(Leu) + AMP + diphosphate. This is Leucine--tRNA ligase from Mycobacterium avium (strain 104).